Reading from the N-terminus, the 218-residue chain is MVRRRGLSGLLEADIYGITAWEYSLGRSNIEVVAQMIEAGIKVIQYREKERPARQKYEECLKIREMTREAGVTFIVNDHVDLALLVDADGVHLGQDDLPADRVRELVGDKMIIGLSTHSPAQARAAEKMGVDYIGVGPIFATKTKKDVCDPVGLEYLEFVVKNISLPFVAIGGIKEHNIAEVSSRGAKCIALVTEIVGAEDIKAKVRALRAIISRKED.

Residues 45–49 (QYREK) and Asn77 contribute to the 4-amino-2-methyl-5-(diphosphooxymethyl)pyrimidine site. Positions 78 and 97 each coordinate Mg(2+). Ser116 contacts 4-amino-2-methyl-5-(diphosphooxymethyl)pyrimidine. 142-144 (TKT) serves as a coordination point for 2-[(2R,5Z)-2-carboxy-4-methylthiazol-5(2H)-ylidene]ethyl phosphate. Lys145 is a binding site for 4-amino-2-methyl-5-(diphosphooxymethyl)pyrimidine. 2-[(2R,5Z)-2-carboxy-4-methylthiazol-5(2H)-ylidene]ethyl phosphate is bound by residues Gly173 and 193-194 (VT).

Belongs to the thiamine-phosphate synthase family. Mg(2+) is required as a cofactor.

It catalyses the reaction 2-[(2R,5Z)-2-carboxy-4-methylthiazol-5(2H)-ylidene]ethyl phosphate + 4-amino-2-methyl-5-(diphosphooxymethyl)pyrimidine + 2 H(+) = thiamine phosphate + CO2 + diphosphate. The enzyme catalyses 2-(2-carboxy-4-methylthiazol-5-yl)ethyl phosphate + 4-amino-2-methyl-5-(diphosphooxymethyl)pyrimidine + 2 H(+) = thiamine phosphate + CO2 + diphosphate. It carries out the reaction 4-methyl-5-(2-phosphooxyethyl)-thiazole + 4-amino-2-methyl-5-(diphosphooxymethyl)pyrimidine + H(+) = thiamine phosphate + diphosphate. It functions in the pathway cofactor biosynthesis; thiamine diphosphate biosynthesis; thiamine phosphate from 4-amino-2-methyl-5-diphosphomethylpyrimidine and 4-methyl-5-(2-phosphoethyl)-thiazole: step 1/1. Its function is as follows. Condenses 4-methyl-5-(beta-hydroxyethyl)thiazole monophosphate (THZ-P) and 2-methyl-4-amino-5-hydroxymethyl pyrimidine pyrophosphate (HMP-PP) to form thiamine monophosphate (TMP). This chain is Thiamine-phosphate synthase, found in Pelotomaculum thermopropionicum (strain DSM 13744 / JCM 10971 / SI).